Consider the following 2204-residue polypeptide: MEDGAQMRVVAFGDQTYDCSEAVSQLLRVRDDAIVVDFLERATAVLKAELARLSSEQQEETPRFATLAELVPRYRAGTLNPAVSQALTCITQLGLFIRQHSSGQEAYPTANDSCITGVCTGALTAVAVGSASSVTALVPLALHTVAVAVRLGARAWEIGSCLADARRGANGRYASWTSAVGGISPQDLQDRISAYMTEQALASVSVPYLSAAVGPGQSSVSAAPVILDAFLSTLLRPLTTTRLPITAPYHAPHLFTAKDVQHVTDCLPPSDAWPTVRIPIISFSRDEAVSRGASFPAAMSEAVRDCLIRPIALDRMAVSIANHARDLGKDSVLPSPIALSFSDKLGPQVNSHLPGTKAPTPELTSTSSIPSAIGAEQQPMAKSPIAILAASGRFPQSSSMDQFWDVLINGVDTHELVPPTRWNAATHVSEDPKAKNVSGTGFGCWLHEAGEFDAAYFNMSPREAPQVDPAQRLALLTATEVLEQAGIVPNRTSSTQKNRVGVWYGATSNDWMETNSAQNVDTYFIPGGNRAFIPGRVNYFHKFSGPSYTIDTACSSSLAALHMACNALWRGEVDTAIVGGTNVLTNPDMTAGLDAGHFLSRSGNCKTFDDEADGYCRGEAVVTLILKRLPDAQADKDPIQASILGIATNHSAEAASITRPHAGAQQDLFQQVLTETGLTANDISVCEMHGTGTQAGDSGETTSVVETLAPLNRSGSAVRTTPLYIGAVKSNVGHAESAAGVSSLAKILLMLKHSKIPPHVGIKTKLNHRLPDLAARNTHIARTEVPWPRPKNGKRRVLLNNFSAAGGNTCLVLEDAPEPEDSQEVDPREHHIVALSAKTPDSMVNNLTNMITWIDKHSGDSIATLPQLSYTTTARRVHHRHRAVATGTDLLQIRSSLQEQLDRRVSGERSIPHPPNGPSFVLAFTGQGSAFEGMGVDLYKRFASFRSDIARYDQICEGMSLPSIKAMFEDEKVFSTASPTLQQLTHVCFQMALYRLWKSLGVQAKAVVGHSLGEYAALYAAGVLSQSDTLYLVGRRAQLMEKHLSQGTHAMLAVRAKEEAIVAAIDGPPGEAYEFSCRNGEQRNVLGGTVAQIQAAKAALEAKKIRCQYLDTPMAFHTGQVDPILPELLQVAAACSIQDPQIPVISPAYGKVIRSAKDFQPEYFTHHCRSSVNMVDALQSAVEEGLLDKNIIGLEIGPGPVVTQFVKEAVGTTMQTFASINKDKDTWQLITQALAKFYLAGASIEWSRYHEDFPGAQKVLELPAYGWTLKNYWLQYVNDWSLRKGDPAVVVAASNLELSSSIHKVITNTITANSDGELVVDADLSREDLHPMVQGHQVYGVPLCTPSVYADIALTLGEYIRQVIKPGEVAQTSVEVAEMNIQSALVANNTGRVQLLRTYAKFDPKAQVASCTFSSIKEDGSSVVEQHANCKIRFGSLEKEKTALESAALAAQARMAALKTQVGQDDNTYRFSKGMIYKMIGQLADFDEKYRGLCAITLDNDAMEASGKVSFKGIPNEGKFHSSPAYLDALSQLGGFVMNANEGVDLEKEVFVNHGWGSMRFFAALDPAMTYYTHVKMTQGKDKLWTGDVLIFDDKQALIGIVGGVALQGVPKRLMHYIVTAANKKASGPPTEKKGSSPPVEKKASAPVAPTRPAIQRKNASIPPPATQVTPQNKTIKTPSVSALIAPALEIVSEEIGMPIDELKDDIDFTDAGLDSLLSLVISSRMRDQLGIEFESAQFMEIGSIGGLKEFLTRLSPPVAVAVATAVEIVKEEALTSLEELTDPSPNEIGTVWRDALKILSEESGLTDEELTDDTSFADVGVDSLMSLVITSRLRDELDIDFPDRALFEECQTIFDLRKRFSGSTESFDSTTTKPSAGDATPPLTDSSASSPPSSEFDGETPMTDLDEVFDSPPAQKRIPSPPKGRIPPAWSMYLQGSQKRSKEILFLFPDGAGAATSYLSLPRLGEDIGVVAFNSPFMKTPHKFVDHTLPDVIASYVEGIRGRQAQGPYHLGGWSAGGILAYAVAQELIAAGEEVSTLLLIDSPSPTKGLDRLPTRFFDHCTNVGLFGTELSRGSGGPNKTPEWLMPHFRASIELLHDYHAPPMKLGNKTKVMVIWAGECAFDGVRYAHIPPSAGDTDEDTEGMKFLTEKRKDFGATEWASLFPGTDVDARVVESEHHFSMMRDSGAQMLVEHMRDGLGIVSS.

Residues Ala11–His250 form an N-terminal acylcarrier protein transacylase domain (SAT) region. The Ketosynthase family 3 (KS3) domain occupies Lys382–Asp815. Active-site for beta-ketoacyl synthase activity residues include Cys554, His689, and His734. The segment at Ala923–Lys1224 is malonyl-CoA:ACP transacylase (MAT) domain. The tract at residues Ser1299 to Val1619 is product template (PT) domain. The segment at His1303–Lys1439 is N-terminal hotdog fold. Residues His1303 to His1616 form the PKS/mFAS DH domain. Catalysis depends on His1336, which acts as the Proton acceptor; for dehydratase activity. Residues Thr1468 to His1616 are C-terminal hotdog fold. Asp1528 (proton donor; for dehydratase activity) is an active-site residue. The disordered stretch occupies residues Lys1625–Lys1674. A compositionally biased stretch (basic and acidic residues) spans Thr1631–Ala1644. Carrier domains are found at residues Pro1679 to Ser1756 and Asp1783 to Thr1865. O-(pantetheine 4'-phosphoryl)serine occurs at positions 1716 and 1824. A compositionally biased stretch (polar residues) spans Ser1864–Pro1875. The segment at Ser1864 to Trp1931 is disordered. A compositionally biased stretch (low complexity) spans Ala1880–Ser1895. The tract at residues Ile1945–Met2195 is thioesterase (TE) domain.

It depends on pantetheine 4'-phosphate as a cofactor.

The catalysed reaction is 6 malonyl-CoA + acetyl-CoA + 6 H(+) = nor-toralactone + 6 CO2 + 7 CoA + 2 H2O. It participates in mycotoxin biosynthesis. Functionally, polyketide synthase; part of the gene cluster that mediates the biosynthesis of cercosporin, a light-activated, non-host-selective toxin. The perylenequinone chromophore of cercosporin absorbs light energy to attain an electronically-activated triplet state and produces active oxygen species such as the hydroxyl radical, superoxide, hydrogen peroxide or singlet oxygen upon reaction with oxygen molecules. These reactive oxygen species cause damage to various cellular components including lipids, proteins and nucleic acids. The first step of cercosporin biosynthesis is performed by the polyketide synthase CTB1 which catalyzes the formation of nor-toralactone. The starter unit acyltransferase (SAT) domain of CTB1 initiates polyketide extension by the selective utilization of acetyl-CoA, which is elongated to the heptaketide in the beta-ketoacyl synthase (KS) domain by successive condensations with six malonyl units introduced by the malonyl acyltransferase (MAT) domain. The product template (PT) domain catalyzes C4-C9 and C2-C11 aldol cyclizations and dehydrations to a trihydroxynaphthalene, which is thought to be delivered to the thioesterase (TE) domain for product release. The bifunctional enzyme CTB3 then methylates nor-toralactone to toralactone before conducting an unusual oxidative aromatic ring opening. The O-methyltransferase CTB2 further methylates the nascent OH-6 of the CBT3 product, blocking further oxidation at this site before the reductase CTB6 reduces the 2-oxopropyl ketone at position C7, giving naphthalene. The FAD-dependent monooxygenase CTB5 in concert with the multicopper oxidase CTB12 are responsible for homodimerization of naphthalene with CTB7 installing the dioxepine moiety, finally producing cercosporin. The fasciclin domain-containing protein CTB11 might act with CTB5 and CTB12 whereas the roles of CTB9 and CTB10 have still to be elucidated. In Cercospora beticola (Sugarbeet leaf spot fungus), this protein is Non-reducing polyketide synthase CTB1.